Here is a 390-residue protein sequence, read N- to C-terminus: MPININKFILDMERFDGTLKKYPEDFIVEEITPEGTVLEVGKEIGFEDVEKWHGSFIHFTVEKTNWNTMDALKQIVRATKTKRKNFGFAGTKDKFAVTTQRFGCFGLKKEQLENINIKDIVIRDVQKTNKKLRMGGLWGNKFTIKIRDLNLSEKEIKRISDLKLDYVLNYYGIQRFGLIRPITHIVGKFIYERDFESAFYTYCGTPINETGDSLEARQLVDMGEFKKALKLFNRGHDYEKRLIQQYLKYKDFKMAFTALPPQLNSMFVNAYQAYLFNEMINKRFDYGFDELEGDILEDNTPTGTLIGYDTKFSGGIQGEIEKEIVERENLDLKKFKIEDFGNFYGTRRKMVTPIYDFKSRFENEIFELSFKLERGNYATIVTREFTGNLS.

Asp93 acts as the Nucleophile in catalysis. The TRUD domain occupies 166–353 (YVLNYYGIQR…YGTRRKMVTP (188 aa)).

It belongs to the pseudouridine synthase TruD family.

It catalyses the reaction uridine(13) in tRNA = pseudouridine(13) in tRNA. In terms of biological role, could be responsible for synthesis of pseudouridine from uracil-13 in transfer RNAs. The polypeptide is Probable tRNA pseudouridine synthase D 2 (Methanococcus maripaludis (strain DSM 14266 / JCM 13030 / NBRC 101832 / S2 / LL)).